The primary structure comprises 425 residues: Serine--tRNA ligase (425 aa).

Positions Thr41–Thr70 are disordered. The segment covering Ser44–Gly54 has biased composition (polar residues). Basic and acidic residues predominate over residues Val57–Thr70. Thr234–Glu236 is an L-serine binding site. ATP is bound at residue Arg265–Glu267. Residue Glu288 coordinates L-serine. Position 352–355 (Glu352–Ser355) interacts with ATP. Ser388 contacts L-serine.

It belongs to the class-II aminoacyl-tRNA synthetase family. Type-1 seryl-tRNA synthetase subfamily. Homodimer. The tRNA molecule binds across the dimer.

It is found in the cytoplasm. The enzyme catalyses tRNA(Ser) + L-serine + ATP = L-seryl-tRNA(Ser) + AMP + diphosphate + H(+). It carries out the reaction tRNA(Sec) + L-serine + ATP = L-seryl-tRNA(Sec) + AMP + diphosphate + H(+). It functions in the pathway aminoacyl-tRNA biosynthesis; selenocysteinyl-tRNA(Sec) biosynthesis; L-seryl-tRNA(Sec) from L-serine and tRNA(Sec): step 1/1. Functionally, catalyzes the attachment of serine to tRNA(Ser). Is also able to aminoacylate tRNA(Sec) with serine, to form the misacylated tRNA L-seryl-tRNA(Sec), which will be further converted into selenocysteinyl-tRNA(Sec). This is Serine--tRNA ligase from Trichodesmium erythraeum (strain IMS101).